A 544-amino-acid polypeptide reads, in one-letter code: MSIFIGGAWPYANGSLHLGHIASLLPGDILARYYRAKGENVLYVSGSDCNGTPIAIRAKQEGVTAKEIANKYHEEFQRCFRDLGFTYDCYTRTDSEHHHETVQKVFLRLLEEGYIYKKTVEQAYCETCTQFLPDRYVEGICPYCHEAARGDQCDACSAILDPLDLLEKKCKLCGSTPSVEETEHFYFALHTFQEQIKKVVEIVKEKGTWRDNAIQLTERYVKEGLQDRAVSRDLPIGVSIPVKGYEDKKIYVWIEAVAGYYSASKHWAEETGKDDQEFWNSDAQTYYVHGKDNIPFHSVIWPAVLLGIGEEAIPRHIVSNEYLTVEKRKLSTSKNWAVWVPDILERYDPDSIRYFLTVNAPENRDTDFSWREFIYSHNSELLGAYGNFVNRTLKFIEKYYGGIVPKGSIEVELKDKVEGLYKHVGEAIEQTKFKVALETIFDAVRFANKYFDEKQPWKQREDDPVSCEETIYNCVYLIANFANLLEPFLPFSSERVRSTLSIIKRNWEPQNTLPSRIDSVQPLFERIDVKQIEHEVGKLYGAVK.

The 'HIGH' region signature appears at 10 to 20 (PYANGSLHLGH). Zn(2+) contacts are provided by C141, C144, C153, and C156. The 'KMSKS' region motif lies at 329–333 (KLSTS). T332 contacts ATP.

It belongs to the class-I aminoacyl-tRNA synthetase family. MetG type 1 subfamily. In terms of assembly, monomer. Zn(2+) is required as a cofactor.

It localises to the cytoplasm. The catalysed reaction is tRNA(Met) + L-methionine + ATP = L-methionyl-tRNA(Met) + AMP + diphosphate. In terms of biological role, is required not only for elongation of protein synthesis but also for the initiation of all mRNA translation through initiator tRNA(fMet) aminoacylation. The polypeptide is Methionine--tRNA ligase (Bacillus cereus (strain B4264)).